A 349-amino-acid chain; its full sequence is Ion-translocating oxidoreductase complex subunit D (349 aa).

Helical transmembrane passes span 20–42 (VMQRVILCLLPGLVVQCAFFGWG), 77–99 (SAMLTAILIGVAIPPLAPWWMIV), and 124–144 (AMAAYVLLLVSFPVQMTTWIA). Thr-185 bears the FMN phosphoryl threonine mark. 5 helical membrane-spanning segments follow: residues 212–232 (STGVGWFWVNLAYLAGGLVLL), 239–259 (WHISTGVLLGLFVASSIGFLL), 265–285 (ASPLMHLFSGATMLAAFFIAT), 291–311 (ATSPRGRIIFGALIGVLVYII), and 315–335 (GGYPDAFAFAVLLANLCAPFI).

The protein belongs to the NqrB/RnfD family. The complex is composed of six subunits: RnfA, RnfB, RnfC, RnfD, RnfE and RnfG. FMN is required as a cofactor.

It localises to the cell inner membrane. Part of a membrane-bound complex that couples electron transfer with translocation of ions across the membrane. This is Ion-translocating oxidoreductase complex subunit D from Shewanella baltica (strain OS185).